A 468-amino-acid chain; its full sequence is Mitochondrial distribution and morphology protein 10 (468 aa).

The protein belongs to the MDM10 family. Component of the ER-mitochondria encounter structure (ERMES) or MDM complex, composed of MMM1, MDM10, MDM12 and MDM34. Associates with the mitochondrial outer membrane sorting assembly machinery SAM(core) complex.

It is found in the mitochondrion outer membrane. Its function is as follows. Component of the ERMES/MDM complex, which serves as a molecular tether to connect the endoplasmic reticulum and mitochondria. Components of this complex are involved in the control of mitochondrial shape and protein biogenesis and may function in phospholipid exchange. MDM10 is involved in the late assembly steps of the general translocase of the mitochondrial outer membrane (TOM complex). Functions in the TOM40-specific route of the assembly of outer membrane beta-barrel proteins, including the association of TOM40 with the receptor TOM22 and small TOM proteins. Can associate with the SAM(core) complex as well as the MDM12-MMM1 complex, both involved in late steps of the major beta-barrel assembly pathway, that is responsible for biogenesis of all outer membrane beta-barrel proteins. May act as a switch that shuttles between both complexes and channels precursor proteins into the TOM40-specific pathway. Plays a role in mitochondrial morphology and in the inheritance of mitochondria. This Blastomyces gilchristii (strain SLH14081) (Blastomyces dermatitidis) protein is Mitochondrial distribution and morphology protein 10.